The chain runs to 95 residues: UPF0473 protein PEPE_1260 (95 aa).

This sequence belongs to the UPF0473 family.

This Pediococcus pentosaceus (strain ATCC 25745 / CCUG 21536 / LMG 10740 / 183-1w) protein is UPF0473 protein PEPE_1260.